A 251-amino-acid polypeptide reads, in one-letter code: Large ribosomal subunit protein uL16m (251 aa).

The N-terminal 29 residues, 1-29 (MWRLLARASAPLLRVPLSDSWALLPASAG), are a transit peptide targeting the mitochondrion.

It belongs to the universal ribosomal protein uL16 family. In terms of assembly, component of the mitochondrial large ribosomal subunit (mt-LSU). Mature mammalian 55S mitochondrial ribosomes consist of a small (28S) and a large (39S) subunit. The 28S small subunit contains a 12S ribosomal RNA (12S mt-rRNA) and 30 different proteins. The 39S large subunit contains a 16S rRNA (16S mt-rRNA), a copy of mitochondrial valine transfer RNA (mt-tRNA(Val)), which plays an integral structural role, and 52 different proteins.

The protein localises to the mitochondrion. The chain is Large ribosomal subunit protein uL16m (MRPL16) from Homo sapiens (Human).